Consider the following 387-residue polypeptide: Alkanesulfonate monooxygenase (387 aa).

Belongs to the SsuD family.

The catalysed reaction is an alkanesulfonate + FMNH2 + O2 = an aldehyde + FMN + sulfite + H2O + 2 H(+). Functionally, catalyzes the desulfonation of aliphatic sulfonates. The protein is Alkanesulfonate monooxygenase of Xanthomonas axonopodis pv. citri (strain 306).